A 224-amino-acid polypeptide reads, in one-letter code: Claudin-17 (224 aa).

The Cytoplasmic segment spans residues 1-7 (MAFYPLQ). The chain crosses the membrane as a helical span at residues 8–28 (IAGLVLGFFGLVGTIGTTLLP). Over 29–81 (QWRVSAFIGSNIIIFERIWEGLWMNCIQQAMVTLQCKFYNSILALPPVLEAAR) the chain is Extracellular. Residues 82–102 (ALMCVAVALALVALIIGICGM) form a helical membrane-spanning segment. Topologically, residues 103 to 124 (KQLQCTGSSERVKAYLLGTSGV) are cytoplasmic. Residues 125 to 145 (LFILTGIFVLIPVSWTANIII) form a helical membrane-spanning segment. Topologically, residues 146–164 (RDFYDPTVHAGQKRELGGA) are extracellular. The chain crosses the membrane as a helical span at residues 165–185 (LFLGWATAAVLFIGGGLLCGY). Topologically, residues 186–224 (CCCNRKERWHRYPVPAYRVPQKDNQRNVTVPRKSSTSYV) are cytoplasmic.

This sequence belongs to the claudin family. In terms of assembly, does not form homotypic polymeric strands and it is not sufficient to form tight junctions by its own. Interacts with OCLN. As to expression, expressed at high levels in the kidney and at mucher lower levels in the brain. In the kidney, expression gradually decreases from the proximal tubule downstream to the distal convoluted tubule. Expressed in the thin ascending limb of Henle's loop, as well as in the thick ascending limb of Henle's loop. In the distal convoluted tubules, expressed only in a few tubules. Not detected in the collecting duct. In the brain, expressed in blood vessels (at protein level).

It localises to the cell junction. The protein localises to the tight junction. The protein resides in the cell membrane. The enzyme catalyses chloride(in) = chloride(out). The catalysed reaction is hydrogencarbonate(in) = hydrogencarbonate(out). It carries out the reaction bromide(in) = bromide(out). It catalyses the reaction iodide(out) = iodide(in). The enzyme catalyses fluoride(in) = fluoride(out). The catalysed reaction is nitrate(in) = nitrate(out). It carries out the reaction thiocyanate(in) = thiocyanate(out). Functionally, channel-forming tight junction protein with selectivity for anions, including chloride and hydrogencarbonate, and for solutes smaller than 9 Angstrom in diameter. In the kidney proximal tubule, may be involved in quantitative reabsorption of filtered anions. Does not affect water permeability. The protein is Claudin-17 (Cldn17) of Mus musculus (Mouse).